Reading from the N-terminus, the 562-residue chain is Solute carrier family 40 member 1 (562 aa).

Topologically, residues 1–20 are cytoplasmic; the sequence is MDSPASKKPRCERFREFFKS. A helical transmembrane segment spans residues 21–50; that stretch reads AKFLIYVGHALSTWGDRMWNFAVAVFLVEL. A Fe cation-binding site is contributed by Asp-36. Over 51-54 the chain is Extracellular; it reads YGNS. The helical transmembrane segment at 55–81 threads the bilayer; sequence LLLTAVYGLVVAGSVLLLGAIIGDWVD. Over 82–84 the chain is Cytoplasmic; the sequence is KNP. A helical transmembrane segment spans residues 85-115; it reads RLKVAQTSLVVQNSAVILCGALLMAVFQFKQ. Topologically, residues 116–123 are extracellular; it reads QLSSMYDG. A helical transmembrane segment spans residues 124-159; that stretch reads WLLTTCYIMVISIANIANLASTAMSITIQRDWVVVV. Residues 160 to 161 lie on the Cytoplasmic side of the membrane; that stretch reads AG. The chain crosses the membrane as a helical span at residues 162–192; it reads DDRSKLADMNATVRIIDQLTNILAPMLVGQI. At 193-199 the chain is on the extracellular side; it reads MAFGSHF. Residues 200–226 form a helical membrane-spanning segment; sequence IGCGFISGWNLFSMCLEYFLLWKVYQK. Residues 227–300 are Cytoplasmic-facing; it reads TPALAFKAGQ…DGWVAYYNQS (74 aa). Residues 301–327 traverse the membrane as a helical segment; the sequence is IFFAGMSLAFLYMTVLGFDCITTGYAY. Cys-320 provides a ligand contact to Fe cation. Over 328–332 the chain is Extracellular; sequence TQGLN. Residues 333–360 traverse the membrane as a helical segment; the sequence is GSVLSLLMGASAVSGICGTVAFTWIRKK. Over 361–362 the chain is Cytoplasmic; that stretch reads CG. A helical transmembrane segment spans residues 363–385; that stretch reads LIRTGFIAGVTQLSCLTLCVASV. The Extracellular portion of the chain corresponds to 386-444; it reads FAPGSPFDLSVSPFEEVLRHLFGDSGSLRESPTFIPTTEPPIQANVTVFEEAPPVESYM. Residues 445–474 form a helical membrane-spanning segment; that stretch reads SVGLLFAGVIAARVGLWSFDLTVTQLIQEN. Over 475 to 479 the chain is Cytoplasmic; it reads VIESE. A helical membrane pass occupies residues 480-504; sequence RGVINGVQNSMNYLLDLLHFIMVIL. His-498 contributes to the Fe cation binding site. At 505–507 the chain is on the extracellular side; the sequence is APN. Residues 508–533 traverse the membrane as a helical segment; the sequence is PEAFGLLVIISVSFVAMGHMMYFRFA. The Cytoplasmic portion of the chain corresponds to 534-562; that stretch reads YKSLGSRLFLFCSPEQKPDPNIPSLPNSV.

The protein belongs to the ferroportin (FP) (TC 2.A.100) family. SLC40A subfamily. In terms of tissue distribution, expressed in the yolk sac and placenta.

The protein localises to the cell membrane. Its subcellular location is the basolateral cell membrane. It carries out the reaction Fe(2+)(in) = Fe(2+)(out). Transports Fe(2+) from the inside of a cell to the outside of the cell, playing a key role for maintaining systemic iron homeostasis. May be involved in transfer of Fe(2+) between maternal and fetal circulation. The chain is Solute carrier family 40 member 1 (slc40a1) from Danio rerio (Zebrafish).